A 595-amino-acid polypeptide reads, in one-letter code: Cardiolipin synthase (CMP-forming) / mitochondrial hydrolase fusion protein (595 aa).

The N-terminal 24 residues, 1 to 24, are a transit peptide targeting the mitochondrion; it reads MLHTINYRSWHLAARQLGRSTFRK. The next 2 helical transmembrane spans lie at 538–560 and 564–586; these read ALQLLLLGLLITEPILPFDASFA and LFYIVGCTTIASGASYCISRNTF.

It in the N-terminal section; belongs to the HAD-like hydrolase superfamily. In the C-terminal section; belongs to the CDP-alcohol phosphatidyltransferase class-I family. Requires Mg(2+) as cofactor. In terms of processing, proteolytically cleaved, presumably during its import into the mitochondrion by mitochondrial processing peptidase.

It localises to the mitochondrion. It is found in the mitochondrion inner membrane. The enzyme catalyses a CDP-1,2-diacyl-sn-glycerol + a 1,2-diacyl-sn-glycero-3-phospho-(1'-sn-glycerol) = a cardiolipin + CMP + H(+). In terms of biological role, catalyzes the synthesis of cardiolipin (CL) (diphosphatidylglycerol) by specifically transferring a phosphatidyl group from CDP-diacylglycerol to phosphatidylglycerol (PG). CL is a key phospholipid in mitochondrial membranes and plays important roles in maintaining the functional integrity and dynamics of mitochondria under both optimal and stress conditions. Its function is as follows. Activity is dispensable for viability. The sequence is that of Cardiolipin synthase (CMP-forming) / mitochondrial hydrolase fusion protein from Schizosaccharomyces pombe (strain 972 / ATCC 24843) (Fission yeast).